Consider the following 156-residue polypeptide: 6,7-dimethyl-8-ribityllumazine synthase (156 aa).

5-amino-6-(D-ribitylamino)uracil is bound by residues Phe25, 59–61 (AFE), and 83–85 (AVI). 88-89 (AT) serves as a coordination point for (2S)-2-hydroxy-3-oxobutyl phosphate. The active-site Proton donor is His91. A 5-amino-6-(D-ribitylamino)uracil-binding site is contributed by Phe116. Arg130 contacts (2S)-2-hydroxy-3-oxobutyl phosphate.

It belongs to the DMRL synthase family.

It carries out the reaction (2S)-2-hydroxy-3-oxobutyl phosphate + 5-amino-6-(D-ribitylamino)uracil = 6,7-dimethyl-8-(1-D-ribityl)lumazine + phosphate + 2 H2O + H(+). It functions in the pathway cofactor biosynthesis; riboflavin biosynthesis; riboflavin from 2-hydroxy-3-oxobutyl phosphate and 5-amino-6-(D-ribitylamino)uracil: step 1/2. Functionally, catalyzes the formation of 6,7-dimethyl-8-ribityllumazine by condensation of 5-amino-6-(D-ribitylamino)uracil with 3,4-dihydroxy-2-butanone 4-phosphate. This is the penultimate step in the biosynthesis of riboflavin. This chain is 6,7-dimethyl-8-ribityllumazine synthase, found in Nitratidesulfovibrio vulgaris (strain ATCC 29579 / DSM 644 / CCUG 34227 / NCIMB 8303 / VKM B-1760 / Hildenborough) (Desulfovibrio vulgaris).